The sequence spans 365 residues: Histidinol-phosphate aminotransferase (365 aa).

K221 bears the N6-(pyridoxal phosphate)lysine mark.

It belongs to the class-II pyridoxal-phosphate-dependent aminotransferase family. Histidinol-phosphate aminotransferase subfamily. As to quaternary structure, homodimer. Requires pyridoxal 5'-phosphate as cofactor.

It catalyses the reaction L-histidinol phosphate + 2-oxoglutarate = 3-(imidazol-4-yl)-2-oxopropyl phosphate + L-glutamate. Its pathway is amino-acid biosynthesis; L-histidine biosynthesis; L-histidine from 5-phospho-alpha-D-ribose 1-diphosphate: step 7/9. This chain is Histidinol-phosphate aminotransferase, found in Nitrobacter hamburgensis (strain DSM 10229 / NCIMB 13809 / X14).